Consider the following 257-residue polypeptide: FPILPGVWVDSTQGNFTKPKALPPAIFLICGDRAWQGIPSRPVGGPCYLGKLTMLAPNHTDIHKILANSSQTGVRHFRSVSHLDDTCSDEVQLWGPTARIFASILAPGVAAAQALREIERLACWSVKQANLTTSLLGDLLDDVTSIRHAVLQNRAAIDFLLLAHGHGCKDIAGMCCFNLSDHSEAIQKKFQLMKEHVNKIGVDSDPIGSWLRGLFGGIGEWAIHLLKGLLLGLVVILLLVVCLPCLLQFVSSSTRKM.

Topologically, residues 1–229 are extracellular; the sequence is FPILPGVWVD…EWAIHLLKGL (229 aa). 3 N-linked (GlcNAc...) asparagine; by host glycosylation sites follow: Asn15, Asn58, and Asn68. The segment at 95 to 115 is fusion peptide; sequence GPTARIFASILAPGVAAAQAL. Residues 112-162 are a coiled coil; sequence AQALREIERLACWSVKQANLTTSLLGDLLDDVTSIRHAVLQNRAAIDFLLL. A glycan (N-linked (GlcNAc...) asparagine; by host) is linked at Asn130. The immunosuppression stretch occupies residues 151-167; that stretch reads LQNRAAIDFLLLAHGHG. Asn178 is a glycosylation site (N-linked (GlcNAc...) asparagine; by host). Residues 180-210 are a coiled coil; the sequence is SDHSEAIQKKFQLMKEHVNKIGVDSDPIGSW. A helical membrane pass occupies residues 230 to 250; sequence LLGLVVILLLVVCLPCLLQFV. A lipid anchor (S-palmitoyl cysteine; by host) is attached at Cys245. Over 251-257 the chain is Cytoplasmic; the sequence is SSSTRKM.

As to quaternary structure, the mature envelope protein (Env) consists of a trimer of SU-TM heterodimers attached by noncovalent interactions or by a labile interchain disulfide bond. In terms of processing, specific enzymatic cleavages in vivo yield mature proteins. Envelope glycoproteins are synthesized as an inactive precursor that is N-glycosylated and processed likely by host cell furin or by a furin-like protease in the Golgi to yield the mature SU and TM proteins. The cleavage site between SU and TM requires the minimal sequence [KR]-X-[KR]-R. Post-translationally, the transmembrane protein is palmitoylated.

Its subcellular location is the virion membrane. It localises to the host cell membrane. Its function is as follows. The surface protein (SU) attaches the virus to the host cell by binding to its receptor. This interaction triggers the refolding of the transmembrane protein (TM) and is thought to activate its fusogenic potential by unmasking its fusion peptide. Fusion occurs at the host cell plasma membrane. In terms of biological role, the transmembrane protein (TM) acts as a class I viral fusion protein. Under the current model, the protein has at least 3 conformational states: pre-fusion native state, pre-hairpin intermediate state, and post-fusion hairpin state. During viral and target cell membrane fusion, the coiled coil regions (heptad repeats) assume a trimer-of-hairpins structure, positioning the fusion peptide in close proximity to the C-terminal region of the ectodomain. The formation of this structure appears to drive apposition and subsequent fusion of viral and target cell membranes. Membranes fusion leads to delivery of the nucleocapsid into the cytoplasm. The protein is Envelope glycoprotein (env) of Galliformes.